The primary structure comprises 212 residues: Protein ERP5 (212 aa).

Residues 1–20 form the signal peptide; sequence MKYNIVHGICLLFAITQAVG. Residues 21-178 lie on the Lumenal side of the membrane; sequence AVHFYAKSGE…FRNQSESANS (158 aa). One can recognise a GOLD domain in the interval 31-124; that stretch reads TKCFYEHLSR…TLRVFIELEI (94 aa). N-linked (GlcNAc...) asparagine glycosylation occurs at asparagine 171. A helical transmembrane segment spans residues 179 to 199; the sequence is KIMTWSVFQLLILLGTCAFQL. Residues 200–212 lie on the Cytoplasmic side of the membrane; sequence RYLKNFFVKQKVV.

Belongs to the EMP24/GP25L family.

Its subcellular location is the endoplasmic reticulum membrane. Its function is as follows. Involved in vesicular protein trafficking. This Saccharomyces cerevisiae (strain ATCC 204508 / S288c) (Baker's yeast) protein is Protein ERP5 (ERP5).